The chain runs to 666 residues: MGAGQSTRSSLNKSSPEELSHVLAHRFASKCFTPLELTHFKDNFNSRALDENGLRHWNEEILSQFLGIPDGAGEKAGPHTDATLDAGPVIFRMVSYLGAFPFQNTLAPSVLTYEAIIKVVVLLTERYGRVLRRGRKDRIKLLFGSLADVGRTQVEEKEMPVQESNDGKANGIAKGNPSHVTGFAIDAPANDDEEEEDDDDDLALAALESLDAIEVFKHDQRIDRSVYKARVSIDTFRRLIALILVIAPLHPIGTTSKLIADQDAESIDAIQAQVDSIIAAFGEEADNDGITYKSFSRVLRTSLPFLFDPLTPLFEHFLFSKNLDLSRRKESRSTEPEHEKSSSTPPPHSPHSESVFLPGPFESNILNTALLSHLSFFLSTSYPLPNLFRNGTRLHPVFSSVYHGESLTAFSHHVLTWHAPSILLLKGVTDSSSSRQDTVLVGAYLPEPWKQSSTTSSDHASDYLDSSKFPCLFQLLPTHTVLLASPFFKTLKFNMPVASFSTKSGIALGCMIPPSSRTSLHHDLRPRPAGGGSLIIDPALENATFVVSDGLNGDGVFLPPGLSPSSSSSFSASALSSTTSISVHAIEVWGVVPTQPELGPVLDPDSSRGDAVAAQKAAWDFEAREAERRRTIHLKVGGGDSEEQTGRALLEMAGIIGDSNYSPRKH.

A compositionally biased stretch (basic and acidic residues) spans 329–341; it reads KESRSTEPEHEKS. The segment at 329–354 is disordered; sequence KESRSTEPEHEKSSSTPPPHSPHSES. Residues 364 to 592 form the TLDc domain; that stretch reads NILNTALLSH…VHAIEVWGVV (229 aa).

Belongs to the RTC5 family.

The protein resides in the cytoplasm. May be involved in a process influencing telomere capping. The protein is Restriction of telomere capping protein 5 (RTC5) of Coccidioides posadasii (strain C735) (Valley fever fungus).